Here is a 309-residue protein sequence, read N- to C-terminus: Probable ABC transporter permease protein YesP (309 aa).

6 helical membrane-spanning segments follow: residues 29-49 (FIIGFLCFTVIPMGASLFLSF), 84-104 (FTYVLAGVPLRLGFALFIAVI), 114-134 (IYRTLFYLPSIIGGSVAVAIM), 167-187 (ALWTLILLSVWQFGSSMLIFL), 217-237 (LPILTPIIFFNLVMQTISAFM), and 275-295 (YASAMAWVMLVIVGLITLILF). The region spanning 80 to 294 (LKVTFTYVLA…VIVGLITLIL (215 aa)) is the ABC transmembrane type-1 domain.

This sequence belongs to the binding-protein-dependent transport system permease family. MalFG subfamily.

It localises to the cell membrane. Functionally, part of a binding-protein-dependent transport system. Probably responsible for the translocation of the substrate across the membrane. The polypeptide is Probable ABC transporter permease protein YesP (yesP) (Bacillus subtilis (strain 168)).